A 259-amino-acid polypeptide reads, in one-letter code: Glucosamine-6-phosphate deaminase (259 aa).

D66 functions as the Proton acceptor; for enolization step in the catalytic mechanism. Residue D135 is the For ring-opening step of the active site. H137 acts as the Proton acceptor; for ring-opening step in catalysis. E142 (for ring-opening step) is an active-site residue.

This sequence belongs to the glucosamine/galactosamine-6-phosphate isomerase family. NagB subfamily.

It carries out the reaction alpha-D-glucosamine 6-phosphate + H2O = beta-D-fructose 6-phosphate + NH4(+). It functions in the pathway amino-sugar metabolism; N-acetylneuraminate degradation; D-fructose 6-phosphate from N-acetylneuraminate: step 5/5. Functionally, catalyzes the reversible isomerization-deamination of glucosamine 6-phosphate (GlcN6P) to form fructose 6-phosphate (Fru6P) and ammonium ion. The protein is Glucosamine-6-phosphate deaminase of Rhodococcus opacus (strain B4).